Reading from the N-terminus, the 282-residue chain is Acetyl-coenzyme A carboxylase carboxyl transferase subunit beta (282 aa).

The CoA carboxyltransferase N-terminal domain occupies Ile-28–Ser-282. Positions 32, 35, 51, and 54 each coordinate Zn(2+). Residues Cys-32–Cys-54 form a C4-type zinc finger.

This sequence belongs to the AccD/PCCB family. Acetyl-CoA carboxylase is a heterohexamer composed of biotin carboxyl carrier protein (AccB), biotin carboxylase (AccC) and two subunits each of ACCase subunit alpha (AccA) and ACCase subunit beta (AccD). Zn(2+) is required as a cofactor.

The protein resides in the cytoplasm. The catalysed reaction is N(6)-carboxybiotinyl-L-lysyl-[protein] + acetyl-CoA = N(6)-biotinyl-L-lysyl-[protein] + malonyl-CoA. Its pathway is lipid metabolism; malonyl-CoA biosynthesis; malonyl-CoA from acetyl-CoA: step 1/1. In terms of biological role, component of the acetyl coenzyme A carboxylase (ACC) complex. Biotin carboxylase (BC) catalyzes the carboxylation of biotin on its carrier protein (BCCP) and then the CO(2) group is transferred by the transcarboxylase to acetyl-CoA to form malonyl-CoA. The sequence is that of Acetyl-coenzyme A carboxylase carboxyl transferase subunit beta from Halalkalibacterium halodurans (strain ATCC BAA-125 / DSM 18197 / FERM 7344 / JCM 9153 / C-125) (Bacillus halodurans).